Here is a 253-residue protein sequence, read N- to C-terminus: 5-oxoprolinase subunit A (253 aa).

This sequence belongs to the LamB/PxpA family. As to quaternary structure, forms a complex composed of PxpA, PxpB and PxpC.

The enzyme catalyses 5-oxo-L-proline + ATP + 2 H2O = L-glutamate + ADP + phosphate + H(+). Functionally, catalyzes the cleavage of 5-oxoproline to form L-glutamate coupled to the hydrolysis of ATP to ADP and inorganic phosphate. The protein is 5-oxoprolinase subunit A of Bacillus cereus (strain AH187).